The following is a 93-amino-acid chain: Acylphosphatase (93 aa).

Residues 6–93 (RARIVVSGRV…GDLGAFEIRF (88 aa)) enclose the Acylphosphatase-like domain. Residues arginine 21 and asparagine 39 contribute to the active site.

Belongs to the acylphosphatase family.

It catalyses the reaction an acyl phosphate + H2O = a carboxylate + phosphate + H(+). The sequence is that of Acylphosphatase (acyP) from Anaeromyxobacter dehalogenans (strain 2CP-C).